The chain runs to 332 residues: Lipoyl synthase (332 aa).

[4Fe-4S] cluster is bound by residues C55, C60, C66, C81, C85, C88, and S292. The Radical SAM core domain occupies 67 to 281 (WEDREATFLI…SDEAERIGFL (215 aa)).

Belongs to the radical SAM superfamily. Lipoyl synthase family. [4Fe-4S] cluster serves as cofactor.

The protein localises to the cytoplasm. It carries out the reaction [[Fe-S] cluster scaffold protein carrying a second [4Fe-4S](2+) cluster] + N(6)-octanoyl-L-lysyl-[protein] + 2 oxidized [2Fe-2S]-[ferredoxin] + 2 S-adenosyl-L-methionine + 4 H(+) = [[Fe-S] cluster scaffold protein] + N(6)-[(R)-dihydrolipoyl]-L-lysyl-[protein] + 4 Fe(3+) + 2 hydrogen sulfide + 2 5'-deoxyadenosine + 2 L-methionine + 2 reduced [2Fe-2S]-[ferredoxin]. It participates in protein modification; protein lipoylation via endogenous pathway; protein N(6)-(lipoyl)lysine from octanoyl-[acyl-carrier-protein]: step 2/2. Functionally, catalyzes the radical-mediated insertion of two sulfur atoms into the C-6 and C-8 positions of the octanoyl moiety bound to the lipoyl domains of lipoate-dependent enzymes, thereby converting the octanoylated domains into lipoylated derivatives. The polypeptide is Lipoyl synthase (Beutenbergia cavernae (strain ATCC BAA-8 / DSM 12333 / CCUG 43141 / JCM 11478 / NBRC 16432 / NCIMB 13614 / HKI 0122)).